Consider the following 283-residue polypeptide: 4-diphosphocytidyl-2-C-methyl-D-erythritol kinase (283 aa).

The active site involves lysine 12. 94–104 lines the ATP pocket; the sequence is PAQAGLGGGSS. Residue aspartate 136 is part of the active site.

The protein belongs to the GHMP kinase family. IspE subfamily.

The enzyme catalyses 4-CDP-2-C-methyl-D-erythritol + ATP = 4-CDP-2-C-methyl-D-erythritol 2-phosphate + ADP + H(+). The protein operates within isoprenoid biosynthesis; isopentenyl diphosphate biosynthesis via DXP pathway; isopentenyl diphosphate from 1-deoxy-D-xylulose 5-phosphate: step 3/6. Functionally, catalyzes the phosphorylation of the position 2 hydroxy group of 4-diphosphocytidyl-2C-methyl-D-erythritol. This Acidovorax ebreus (strain TPSY) (Diaphorobacter sp. (strain TPSY)) protein is 4-diphosphocytidyl-2-C-methyl-D-erythritol kinase.